We begin with the raw amino-acid sequence, 134 residues long: Aspartate 1-decarboxylase (134 aa).

Residue serine 25 is the Schiff-base intermediate with substrate; via pyruvic acid of the active site. Serine 25 is subject to Pyruvic acid (Ser). Threonine 57 provides a ligand contact to substrate. Tyrosine 58 acts as the Proton donor in catalysis. Residue 73–75 (GAA) participates in substrate binding.

This sequence belongs to the PanD family. In terms of assembly, heterooctamer of four alpha and four beta subunits. Requires pyruvate as cofactor. In terms of processing, is synthesized initially as an inactive proenzyme, which is activated by self-cleavage at a specific serine bond to produce a beta-subunit with a hydroxyl group at its C-terminus and an alpha-subunit with a pyruvoyl group at its N-terminus.

Its subcellular location is the cytoplasm. It carries out the reaction L-aspartate + H(+) = beta-alanine + CO2. Its pathway is cofactor biosynthesis; (R)-pantothenate biosynthesis; beta-alanine from L-aspartate: step 1/1. Catalyzes the pyruvoyl-dependent decarboxylation of aspartate to produce beta-alanine. This chain is Aspartate 1-decarboxylase, found in Geobacter sp. (strain M21).